The primary structure comprises 441 residues: 3-phosphoshikimate 1-carboxyvinyltransferase (441 aa).

3 residues coordinate 3-phosphoshikimate: Lys-22, Ser-23, and Arg-27. Lys-22 contacts phosphoenolpyruvate. Phosphoenolpyruvate contacts are provided by Gly-95 and Arg-123. Residues Ser-168, Gln-170, Asp-321, and Lys-348 each contribute to the 3-phosphoshikimate site. Gln-170 contacts phosphoenolpyruvate. Asp-321 acts as the Proton acceptor in catalysis. Phosphoenolpyruvate contacts are provided by Arg-352 and Arg-400.

It belongs to the EPSP synthase family. As to quaternary structure, monomer.

The protein resides in the cytoplasm. The enzyme catalyses 3-phosphoshikimate + phosphoenolpyruvate = 5-O-(1-carboxyvinyl)-3-phosphoshikimate + phosphate. The protein operates within metabolic intermediate biosynthesis; chorismate biosynthesis; chorismate from D-erythrose 4-phosphate and phosphoenolpyruvate: step 6/7. Catalyzes the transfer of the enolpyruvyl moiety of phosphoenolpyruvate (PEP) to the 5-hydroxyl of shikimate-3-phosphate (S3P) to produce enolpyruvyl shikimate-3-phosphate and inorganic phosphate. This is 3-phosphoshikimate 1-carboxyvinyltransferase from Novosphingobium aromaticivorans (strain ATCC 700278 / DSM 12444 / CCUG 56034 / CIP 105152 / NBRC 16084 / F199).